A 488-amino-acid chain; its full sequence is GlcNAc-binding protein A (488 aa).

Residues 1–24 (MIMIITKKTLLPVTLALFSSGVMA) form the signal peptide. In terms of domain architecture, Chitin-binding type-4 spans 25-202 (HGYVSSVEGG…SFYNVIDVMF (178 aa)). One can recognise a Chitin-binding type-3 domain in the interval 439 to 480 (AGSKVLATDGRIYECKPFPYSGYCIQWSPSATQFEPGVGSDW).

This sequence belongs to the GbpA family.

It is found in the secreted. In terms of biological role, probably interacts with GlcNAc residues. May promote attachment to both epithelial cell surfaces and chitin. This Photobacterium profundum (strain SS9) protein is GlcNAc-binding protein A.